The primary structure comprises 361 residues: Ribosomal RNA large subunit methyltransferase M (361 aa).

S-adenosyl-L-methionine contacts are provided by residues serine 187, 220 to 223 (CPGG), aspartate 239, aspartate 259, and aspartate 276. Residue lysine 305 is the Proton acceptor of the active site.

This sequence belongs to the class I-like SAM-binding methyltransferase superfamily. RNA methyltransferase RlmE family. RlmM subfamily. Monomer.

The protein localises to the cytoplasm. It catalyses the reaction cytidine(2498) in 23S rRNA + S-adenosyl-L-methionine = 2'-O-methylcytidine(2498) in 23S rRNA + S-adenosyl-L-homocysteine + H(+). In terms of biological role, catalyzes the 2'-O-methylation at nucleotide C2498 in 23S rRNA. The protein is Ribosomal RNA large subunit methyltransferase M of Shewanella oneidensis (strain ATCC 700550 / JCM 31522 / CIP 106686 / LMG 19005 / NCIMB 14063 / MR-1).